Consider the following 405-residue polypeptide: Glutathione S-transferase LANCL1 (405 aa).

A Zn(2+)-binding site is contributed by C282. K323 provides a ligand contact to glutathione. Zn(2+)-binding residues include C328 and H329. 370 to 373 (RTPD) lines the glutathione pocket.

Belongs to the LanC-like protein family.

The protein localises to the cytoplasm. It localises to the cell membrane. It catalyses the reaction RX + glutathione = an S-substituted glutathione + a halide anion + H(+). It carries out the reaction 1-chloro-2,4-dinitrobenzene + glutathione = 2,4-dinitrophenyl-S-glutathione + chloride + H(+). In terms of biological role, functions as a glutathione transferase. Catalyzes conjugation of the glutathione (GSH) to artificial substrates 1-chloro-2,4-dinitrobenzene (CDNB) and p-nitrophenyl acetate. Binds glutathione. The protein is Glutathione S-transferase LANCL1 of Danio rerio (Zebrafish).